The chain runs to 251 residues: Probable transcriptional regulatory protein MMAR_2098 (251 aa).

This sequence belongs to the TACO1 family.

The protein resides in the cytoplasm. This Mycobacterium marinum (strain ATCC BAA-535 / M) protein is Probable transcriptional regulatory protein MMAR_2098.